The chain runs to 35 residues: KWKIFKKIEKVGRNIRNGIIKAGPAVAVLGEAKAL.

Leucine 35 carries the post-translational modification Leucine amide.

It belongs to the cecropin family.

Its subcellular location is the secreted. Functionally, cecropins have lytic and antibacterial activity against several Gram-positive and Gram-negative bacteria. This is Cecropin-B from Antheraea pernyi (Chinese oak silk moth).